Reading from the N-terminus, the 387-residue chain is Eukaryotic translation initiation factor 3 subunit M (387 aa).

Residues 181–340 form the PCI domain; that stretch reads LSSKVMIELL…RKVHISSTMH (160 aa).

This sequence belongs to the eIF-3 subunit M family. In terms of assembly, component of the eukaryotic translation initiation factor 3 (eIF-3) complex. The eIF-3 complex interacts with pix.

Its subcellular location is the cytoplasm. The protein localises to the golgi apparatus. Component of the eukaryotic translation initiation factor 3 (eIF-3) complex, which is involved in protein synthesis of a specialized repertoire of mRNAs and, together with other initiation factors, stimulates binding of mRNA and methionyl-tRNAi to the 40S ribosome. The eIF-3 complex specifically targets and initiates translation of a subset of mRNAs involved in cell proliferation. The polypeptide is Eukaryotic translation initiation factor 3 subunit M (Drosophila ananassae (Fruit fly)).